The chain runs to 485 residues: MTHWIAGEWVAGTGEKLQSHTPYSHELLWQGYSASGEQVDAAVNAARRAFLDWKKRPFAEREQKVLAFAELVKANSEQIAQVIAKETGKPLWETRTEAASIAGKIAISIRAYHERTGETVREAAGNQLVLRHRPLGVMAVFGPYNFPGHLPNGHIVPALLAGNTVVFKPSEQTPWTGEVLMQLWQQAGLPAGVINLVQGSKETGIALAQSRGIDGLLFTGSANTGHLLHRQFAGQPDKMLALEMGGNNPMVISEHYGDLDATVYTIIQSAFISSGQRCTCARRLYVPLGTKGDALLDKLVSVTANLRIDQPFAEPAPFMGPLVSEAAAQVILKAQADLQALGGKSLLEARALHAAFITPAIIDVTAIERLPDDEYFGPLLQVVRYQTLAQAVELANDTRFGLSAGLVSTDDGEWDYFVEHIRAGIVNRNRQLTGASGDAPFGGPGASGNLRPSAFYAADYCAYPMASMEGETTLLPATLSPGVEL.

220-225 (GSANTG) lines the NAD(+) pocket. Residues Glu243 and Cys278 contribute to the active site.

Belongs to the aldehyde dehydrogenase family. AstD subfamily.

It carries out the reaction N-succinyl-L-glutamate 5-semialdehyde + NAD(+) + H2O = N-succinyl-L-glutamate + NADH + 2 H(+). It functions in the pathway amino-acid degradation; L-arginine degradation via AST pathway; L-glutamate and succinate from L-arginine: step 4/5. Functionally, catalyzes the NAD-dependent reduction of succinylglutamate semialdehyde into succinylglutamate. This Vibrio cholerae serotype O1 (strain M66-2) protein is N-succinylglutamate 5-semialdehyde dehydrogenase.